Reading from the N-terminus, the 213-residue chain is Neuromodulin (213 aa).

A disordered region spans residues 1-213 (MLCCIRRTKP…AEEAGKDQNV (213 aa)). Residues Cys3 and Cys4 are each lipidated (S-palmitoyl cysteine). Residues 9-33 (KPVEKNEEADQEIKQDGTKPEENAH) are compositionally biased toward basic and acidic residues. The 30-residue stretch at 32 to 61 (AHKAATKIQASFRGHITRKKMKDEDKDGEN) folds into the IQ domain. Acidic residues predominate over residues 57–73 (KDGENDTAPDESAETEE). Residues 74-86 (KEERVSPSEEKPV) show a composition bias toward basic and acidic residues. Residues 102–122 (PNSPAAEAPPTAATDSAPSDT) are compositionally biased toward low complexity. Positions 157 to 169 (EKEEEEEEEEEEE) are enriched in acidic residues. Basic and acidic residues predominate over residues 191-213 (QTDKKEALDDSKPAEEAGKDQNV).

The protein belongs to the neuromodulin family. Binds calmodulin with a greater affinity in the absence of Ca(2+) than in its presence. Palmitoylated. Palmitoylation is essential for plasma membrane association.

The protein resides in the cell membrane. It localises to the cell projection. The protein localises to the growth cone membrane. Its subcellular location is the synapse. It is found in the filopodium membrane. Functionally, this protein is associated with nerve growth. It is a major component of the motile 'growth cones' that form the tips of elongating axons. Plays a role in axonal and dendritic filopodia induction. In Carassius auratus (Goldfish), this protein is Neuromodulin (gap43).